The sequence spans 310 residues: Methionyl-tRNA formyltransferase (310 aa).

Residue 109 to 112 (SLLP) participates in (6S)-5,6,7,8-tetrahydrofolate binding.

Belongs to the Fmt family.

It carries out the reaction L-methionyl-tRNA(fMet) + (6R)-10-formyltetrahydrofolate = N-formyl-L-methionyl-tRNA(fMet) + (6S)-5,6,7,8-tetrahydrofolate + H(+). Attaches a formyl group to the free amino group of methionyl-tRNA(fMet). The formyl group appears to play a dual role in the initiator identity of N-formylmethionyl-tRNA by promoting its recognition by IF2 and preventing the misappropriation of this tRNA by the elongation apparatus. This is Methionyl-tRNA formyltransferase from Chloroflexus aurantiacus (strain ATCC 29366 / DSM 635 / J-10-fl).